We begin with the raw amino-acid sequence, 331 residues long: Probable cytosolic iron-sulfur protein assembly protein Ciao1 (331 aa).

WD repeat units follow at residues 12–51, 57–96, 97–136, 142–181, 188–227, 246–285, and 297–331; these read GHKG…WTTK, GHKR…ATLE, GHEN…EFEC, AHTQ…SDWD, SHTS…NEAG, QHSR…KRDE, and AHEQ…KLQE.

The protein belongs to the WD repeat CIA1 family.

Essential component of the cytosolic iron-sulfur (Fe/S) protein assembly machinery. Required for the maturation of extramitochondrial Fe/S proteins. The protein is Probable cytosolic iron-sulfur protein assembly protein Ciao1 of Drosophila grimshawi (Hawaiian fruit fly).